The chain runs to 105 residues: uncharacterized protein (105 aa).

This sequence to C.jejuni CJ1463.

This is an uncharacterized protein from Helicobacter pylori (strain ATCC 700392 / 26695) (Campylobacter pylori).